The primary structure comprises 64 residues: Prokaryotic ubiquitin-like protein Pup (64 aa).

Residues methionine 1–glycine 11 show a composition bias toward basic and acidic residues. The tract at residues methionine 1–aspartate 37 is disordered. The interval aspartate 21–tyrosine 58 is ARC ATPase binding. A coiled-coil region spans residues alanine 24–glutamate 52. A Deamidated glutamine modification is found at glutamine 64. Glutamine 64 is covalently cross-linked (Isoglutamyl lysine isopeptide (Gln-Lys) (interchain with K-? in acceptor proteins)).

The protein belongs to the prokaryotic ubiquitin-like protein family. As to quaternary structure, strongly interacts with the proteasome-associated ATPase ARC through a hydrophobic interface; the interacting region of Pup lies in its C-terminal half. There is one Pup binding site per ARC hexamer ring. Post-translationally, is modified by deamidation of its C-terminal glutamine to glutamate by the deamidase Dop, a prerequisite to the subsequent pupylation process.

Its pathway is protein degradation; proteasomal Pup-dependent pathway. Functionally, protein modifier that is covalently attached to lysine residues of substrate proteins, thereby targeting them for proteasomal degradation. The tagging system is termed pupylation. The chain is Prokaryotic ubiquitin-like protein Pup from Rhodococcus jostii (strain RHA1).